Consider the following 264-residue polypeptide: Proteasome subunit beta type-4 (264 aa).

An N-acetylmethionine modification is found at Met1. Residues 1-45 (MEALLESRSGLWAGGPAPGQFYRIPPTPGSSVDPVSALYGSPITR) constitute a propeptide that is removed on maturation. Tyr102 carries the phosphotyrosine modification.

It belongs to the peptidase T1B family. The 26S proteasome consists of a 20S proteasome core and two 19S regulatory subunits. The 20S proteasome core is a barrel-shaped complex made of 28 subunits that are arranged in four stacked rings. The two outer rings are each formed by seven alpha subunits, and the two inner rings are formed by seven beta subunits. The proteolytic activity is exerted by three beta-subunits PSMB5, PSMB6 and PSMB7. Forms a ternary complex with SMAD1 and OAZ1 before PSMB4 is incorporated into the 20S proteasome. Interacts with PRPF19.

Its subcellular location is the cytoplasm. The protein localises to the nucleus. Functionally, non-catalytic component of the 20S core proteasome complex involved in the proteolytic degradation of most intracellular proteins. This complex plays numerous essential roles within the cell by associating with different regulatory particles. Associated with two 19S regulatory particles, forms the 26S proteasome and thus participates in the ATP-dependent degradation of ubiquitinated proteins. The 26S proteasome plays a key role in the maintenance of protein homeostasis by removing misfolded or damaged proteins that could impair cellular functions, and by removing proteins whose functions are no longer required. Associated with the PA200 or PA28, the 20S proteasome mediates ubiquitin-independent protein degradation. This type of proteolysis is required in several pathways including spermatogenesis (20S-PA200 complex) or generation of a subset of MHC class I-presented antigenic peptides (20S-PA28 complex). SMAD1/OAZ1/PSMB4 complex mediates the degradation of the CREBBP/EP300 repressor SNIP1. This chain is Proteasome subunit beta type-4 (PSMB4), found in Bos taurus (Bovine).